Here is an 85-residue protein sequence, read N- to C-terminus: U4-theraphotoxin-Hhn1a (85 aa).

A signal peptide spans 1 to 22; it reads MKVTLIAILTCAAVLVLHTTAA. Residues 23 to 48 constitute a propeptide that is removed on maturation; that stretch reads EELEAESQLMEVGMPDTELAAVDEER. 3 disulfide bridges follow: C52–C66, C56–C77, and C71–C82.

It belongs to the neurotoxin 12 (Hwtx-2) family. 02 (Hwtx-2) subfamily. In terms of assembly, monomer. As to expression, expressed by the venom gland.

It is found in the secreted. Functionally, neurotoxin active on both insects and mammals. The sequence is that of U4-theraphotoxin-Hhn1a from Cyriopagopus hainanus (Chinese bird spider).